Here is a 381-residue protein sequence, read N- to C-terminus: GDP-mannose transporter (381 aa).

The Cytoplasmic segment spans residues 1 to 39 (MVESKKTDDYAIEMDKIDQGSKNFEAAAPPQPRSVPSSS). Residues 40–60 (LSGNPVLPVLAYCGSSILMTV) traverse the membrane as a helical segment. At 61–68 (MNKYVLSG) the chain is on the lumenal side. The chain crosses the membrane as a helical span at residues 69-89 (LDFNLNFFLLCVQSIVCIIAI). Residues 90–109 (QTCKFCGLITYRDFSADEAK) lie on the Cytoplasmic side of the membrane. A helical membrane pass occupies residues 110–126 (KWFPISLLLIGMIYTGS). Topologically, residues 127 to 133 (KALQFLS) are lumenal. The chain crosses the membrane as a helical span at residues 134–150 (IPVYTIFKNLTIILIAY). Over 151-159 (GEVLWFGGS) the chain is Cytoplasmic. A helical membrane pass occupies residues 160–181 (VTGLTLFSFGLMVLSSIIAAWA). The Lumenal segment spans residues 182–199 (DIKHAVESSGDTSAQVST). The helical transmembrane segment at 200 to 220 (LNAGYIWMLINCLCTSSYVLG) threads the bilayer. At 221 to 232 (MRKRIKLTNFKD) the chain is on the cytoplasmic side. The helical transmembrane segment at 233–253 (FDTMFYNNLLSIPVLVVLTGL) threads the bilayer. The Lumenal portion of the chain corresponds to 254 to 273 (MEDWSSANIDRNFPQADRSS). Residues 274–294 (IMFAMILSGLSSVFISYTSAW) form a helical membrane-spanning segment. At 295–302 (CVRVTSST) the chain is on the cytoplasmic side. The helical transmembrane segment at 303 to 323 (TYSMVGALNKLPIALSGLIFF) threads the bilayer. Residues 324-326 (DAP) lie on the Lumenal side of the membrane. The chain crosses the membrane as a helical span at residues 327 to 347 (VTFPSVSAIAVGFVSGIVYAI). Residues 348–381 (AKIKQNAKPKTGVLPTSNPLVSASSQSMRDSLRS) lie on the Cytoplasmic side of the membrane.

It belongs to the TPT transporter family. SLC35D subfamily. As to quaternary structure, homooligomer.

The protein resides in the golgi apparatus membrane. Its subcellular location is the cytoplasmic vesicle membrane. The protein localises to the endoplasmic reticulum membrane. Involved in the import of GDP-mannose from the cytoplasm into the Golgi lumen. This is GDP-mannose transporter (gmt1) from Aspergillus oryzae (strain ATCC 42149 / RIB 40) (Yellow koji mold).